Reading from the N-terminus, the 286-residue chain is Eukaryotic translation initiation factor 3 subunit J (286 aa).

Disordered stretches follow at residues 1-35 (MSWD…DSWD), 141-162 (AASG…HPLF), and 229-258 (KAER…AVKT). Residues 21–35 (WEEEGNDEPLLDSWD) are compositionally biased toward acidic residues. Residues 35–75 (DIDEEEVARKKKEEEAKKKAEKEALKKKQEESKAKKLSKNK) are a coiled coil.

Belongs to the eIF-3 subunit J family. As to quaternary structure, component of the eukaryotic translation initiation factor 3 (eIF-3) complex.

Its subcellular location is the cytoplasm. In terms of biological role, component of the eukaryotic translation initiation factor 3 (eIF-3) complex, which is involved in protein synthesis of a specialized repertoire of mRNAs and, together with other initiation factors, stimulates binding of mRNA and methionyl-tRNAi to the 40S ribosome. The eIF-3 complex specifically targets and initiates translation of a subset of mRNAs involved in cell proliferation. The polypeptide is Eukaryotic translation initiation factor 3 subunit J (Debaryomyces hansenii (strain ATCC 36239 / CBS 767 / BCRC 21394 / JCM 1990 / NBRC 0083 / IGC 2968) (Yeast)).